A 414-amino-acid chain; its full sequence is Snake venom metalloproteinase (414 aa).

Residues 1–20 (MIEVLLVTICLAVFPYQGSS) form the signal peptide. A propeptide spanning residues 21 to 190 (IILESGNVND…KASDLNFNSD (170 aa)) is cleaved from the precursor. Gln191 carries the post-translational modification Pyrrolidone carboxylic acid. One can recognise a Peptidase M12B domain in the interval 197 to 393 (RYVELVIVAD…YKPQCILNKP (197 aa)). Ca(2+) contacts are provided by Glu200 and Asp284. Intrachain disulfides connect Cys308–Cys388 and Cys348–Cys355. His333 serves as a coordination point for Zn(2+). The active site involves Glu334. His337 and His343 together coordinate Zn(2+). The Ca(2+) site is built by Cys388 and Asn391. Positions 394-414 (LRIDPVSTPVSGNELLEAGEE) are excised as a propeptide.

This sequence belongs to the venom metalloproteinase (M12B) family. P-I subfamily. As to quaternary structure, monomer. Zn(2+) serves as cofactor. Expressed by the venom gland.

The protein resides in the secreted. Its function is as follows. Snake venom metalloproteinase that impairs hemostasis in the envenomed animal. This chain is Snake venom metalloproteinase, found in Crotalus molossus molossus (Northern black-tailed rattlesnake).